A 412-amino-acid chain; its full sequence is NADH-quinone oxidoreductase subunit D (412 aa).

The protein belongs to the complex I 49 kDa subunit family. In terms of assembly, NDH-1 is composed of 14 different subunits. Subunits NuoB, C, D, E, F, and G constitute the peripheral sector of the complex.

The protein resides in the cell inner membrane. The catalysed reaction is a quinone + NADH + 5 H(+)(in) = a quinol + NAD(+) + 4 H(+)(out). Functionally, NDH-1 shuttles electrons from NADH, via FMN and iron-sulfur (Fe-S) centers, to quinones in the respiratory chain. The immediate electron acceptor for the enzyme in this species is believed to be a menaquinone. Couples the redox reaction to proton translocation (for every two electrons transferred, four hydrogen ions are translocated across the cytoplasmic membrane), and thus conserves the redox energy in a proton gradient. In Flavobacterium psychrophilum (strain ATCC 49511 / DSM 21280 / CIP 103535 / JIP02/86), this protein is NADH-quinone oxidoreductase subunit D.